The following is a 250-amino-acid chain: Ribosomal RNA small subunit methyltransferase J (250 aa).

S-adenosyl-L-methionine is bound by residues 101-102, 117-118, 153-154, and Asp-171; these read RD, ER, and SS.

It belongs to the methyltransferase superfamily. RsmJ family.

The protein resides in the cytoplasm. The enzyme catalyses guanosine(1516) in 16S rRNA + S-adenosyl-L-methionine = N(2)-methylguanosine(1516) in 16S rRNA + S-adenosyl-L-homocysteine + H(+). In terms of biological role, specifically methylates the guanosine in position 1516 of 16S rRNA. The sequence is that of Ribosomal RNA small subunit methyltransferase J from Shigella boydii serotype 18 (strain CDC 3083-94 / BS512).